Reading from the N-terminus, the 212-residue chain is Ribosomal RNA small subunit methyltransferase G (212 aa).

Residues Gly-73, Phe-78, 124-125, and Arg-137 contribute to the S-adenosyl-L-methionine site; that span reads IE.

Belongs to the methyltransferase superfamily. RNA methyltransferase RsmG family.

The protein resides in the cytoplasm. Its function is as follows. Specifically methylates the N7 position of a guanine in 16S rRNA. The polypeptide is Ribosomal RNA small subunit methyltransferase G (Karelsulcia muelleri (strain GWSS) (Sulcia muelleri)).